Here is a 476-residue protein sequence, read N- to C-terminus: Lactate utilization protein B (476 aa).

2 consecutive 4Fe-4S ferredoxin-type domains span residues 304–334 and 353–382; these read GGEF…GHTY and YDDF…LHQL. 7 residues coordinate [4Fe-4S] cluster: Cys313, Cys316, Cys319, Cys323, Cys366, Cys369, and Cys373. Residues 452–476 form a disordered region; sequence RDFPAPNKNSFRNWMKHRTKGDEES.

This sequence belongs to the LutB/YkgF family.

Functionally, is involved in L-lactate degradation and allows cells to grow with lactate as the sole carbon source. Has probably a role as an electron transporter during oxidation of L-lactate. The polypeptide is Lactate utilization protein B (Lysinibacillus sphaericus (strain C3-41)).